Reading from the N-terminus, the 358-residue chain is Nicotinate-nucleotide--dimethylbenzimidazole phosphoribosyltransferase (358 aa).

Catalysis depends on glutamate 323, which acts as the Proton acceptor.

It belongs to the CobT family.

The catalysed reaction is 5,6-dimethylbenzimidazole + nicotinate beta-D-ribonucleotide = alpha-ribazole 5'-phosphate + nicotinate + H(+). It participates in nucleoside biosynthesis; alpha-ribazole biosynthesis; alpha-ribazole from 5,6-dimethylbenzimidazole: step 1/2. Functionally, catalyzes the synthesis of alpha-ribazole-5'-phosphate from nicotinate mononucleotide (NAMN) and 5,6-dimethylbenzimidazole (DMB). This chain is Nicotinate-nucleotide--dimethylbenzimidazole phosphoribosyltransferase, found in Oleidesulfovibrio alaskensis (strain ATCC BAA-1058 / DSM 17464 / G20) (Desulfovibrio alaskensis).